Here is a 460-residue protein sequence, read N- to C-terminus: Flavonol 3-O-glucosyltransferase (460 aa).

Histidine 23 acts as the Proton acceptor in catalysis. The an anthocyanidin site is built by histidine 23 and glutamine 88. Aspartate 123 functions as the Charge relay in the catalytic mechanism. Threonine 145 serves as a coordination point for UDP-alpha-D-glucose. An anthocyanidin is bound at residue histidine 154. Positions 339, 341, 356, 359, 360, 361, and 364 each coordinate UDP-alpha-D-glucose. Glycine 379 is an an anthocyanidin binding site. Aspartate 380 and glutamine 381 together coordinate UDP-alpha-D-glucose.

This sequence belongs to the UDP-glycosyltransferase family.

The catalysed reaction is a flavonol + UDP-alpha-D-glucose = a flavonol 3-O-beta-D-glucoside + UDP + H(+). It catalyses the reaction quercetin + UDP-alpha-D-glucose = quercetin 3-O-beta-D-glucoside + UDP + H(+). Its pathway is flavonoid metabolism. Flavonol 3-O-glucosyltransferase that catalyzes the transfer of glucose from UDP-glucose to the 3-OH position of quercetin and kaempferol. Possesses high quercetin 3-O-glucosyltransferase activity in vitro. Catalyzes the glycosylation of anthocyanins from UDP-glucose. Also active in vitro on benzoates and benzoate derivatives. This is Flavonol 3-O-glucosyltransferase from Arabidopsis thaliana (Mouse-ear cress).